The primary structure comprises 1798 residues: DNA polymerase II large subunit (1798 aa).

The tract at residues 286 to 309 (EKGKSSEENKDESKAEDTGTESVA) is disordered. The DOD-type homing endonuclease domain occupies 1184 to 1319 (VVGYYLAEGY…ETLLLAKFGI (136 aa)). The disordered stretch occupies residues 1699 to 1798 (TGHSNGKNGY…GISLDEFFGS (100 aa)). Over residues 1714-1731 (GKNGKASKKSGSLASKLS) the composition is skewed to low complexity. Residues 1733-1753 (KGKEPSKKKESAKPKRSEKVK) show a composition bias toward basic and acidic residues.

The protein belongs to the archaeal DNA polymerase II family. Heterodimer of a large subunit and a small subunit. In terms of processing, this protein undergoes a protein self splicing that involves a post-translational excision of the intervening region (intein) followed by peptide ligation.

It carries out the reaction DNA(n) + a 2'-deoxyribonucleoside 5'-triphosphate = DNA(n+1) + diphosphate. It catalyses the reaction Exonucleolytic cleavage in the 3'- to 5'-direction to yield nucleoside 5'-phosphates.. Its function is as follows. Possesses two activities: a DNA synthesis (polymerase) and an exonucleolytic activity that degrades single-stranded DNA in the 3'- to 5'-direction. Has a template-primer preference which is characteristic of a replicative DNA polymerase. The chain is DNA polymerase II large subunit (polC) from Thermococcus kodakarensis (strain ATCC BAA-918 / JCM 12380 / KOD1) (Pyrococcus kodakaraensis (strain KOD1)).